Reading from the N-terminus, the 309-residue chain is Homoserine kinase (309 aa).

Residue 91–101 (PIGSGLGSSAC) coordinates ATP.

This sequence belongs to the GHMP kinase family. Homoserine kinase subfamily.

It localises to the cytoplasm. The catalysed reaction is L-homoserine + ATP = O-phospho-L-homoserine + ADP + H(+). The protein operates within amino-acid biosynthesis; L-threonine biosynthesis; L-threonine from L-aspartate: step 4/5. Its function is as follows. Catalyzes the ATP-dependent phosphorylation of L-homoserine to L-homoserine phosphate. The sequence is that of Homoserine kinase from Photorhabdus laumondii subsp. laumondii (strain DSM 15139 / CIP 105565 / TT01) (Photorhabdus luminescens subsp. laumondii).